The primary structure comprises 376 residues: Ribosomal RNA large subunit methyltransferase G (376 aa).

The protein belongs to the methyltransferase superfamily. RlmG family.

The protein localises to the cytoplasm. The catalysed reaction is guanosine(1835) in 23S rRNA + S-adenosyl-L-methionine = N(2)-methylguanosine(1835) in 23S rRNA + S-adenosyl-L-homocysteine + H(+). Functionally, specifically methylates the guanine in position 1835 (m2G1835) of 23S rRNA. This chain is Ribosomal RNA large subunit methyltransferase G, found in Cronobacter sakazakii (strain ATCC BAA-894) (Enterobacter sakazakii).